Consider the following 441-residue polypeptide: MDEIESLIGLRPTPLTWPVVIAGDFLGVWDPPPSLPGAANHEISAPTARISCMLIERRDAAARLRRALHRAPVVLLTGPRQAGKTTLSRLVGKSAPECTFDAENPVDATRLADPMLALSGLSGLITIDEAQRIPDLFPVLRVLVDRPVMPARFLILGSASPDLVGLASESLAGRVELVELSGLTVRDVGSSAADRLWLRGGLPPSFTARSNEDSAAWRDGYITTFLERDLAQLGVRIPAATMRRAWTMLAHYHGQLFSGAELARSLDVAQTTARRYLDALTDALVVRQLTPWFANIGKRQRRSPKIYIRDTGLLHRLLGIDDRLALERNPKLGASWEGFVLEQLAALLAPNPLYYWRTQQDAELDLYVELSGRPYGFEIKRTSTPSISRSMRSALVDLQLARLAIVYPGEHRFPLSDTVVAVPADQILTTGSVDELLALLK.

78-85 (GPRQAGKT) contacts ATP.

This is an uncharacterized protein from Mycobacterium bovis (strain ATCC BAA-935 / AF2122/97).